We begin with the raw amino-acid sequence, 381 residues long: (S)-scoulerine 9-O-methyltransferase (381 aa).

5 residues coordinate S-adenosyl-L-methionine: Gly223, Glu246, Asp266, Met267, and Lys280. Catalysis depends on His284, which acts as the Proton acceptor.

This sequence belongs to the class I-like SAM-binding methyltransferase superfamily. Cation-independent O-methyltransferase family. COMT subfamily.

It carries out the reaction (S)-scoulerine + S-adenosyl-L-methionine = (S)-tetrahydrocolumbamine + S-adenosyl-L-homocysteine + H(+). Produces a precursor of protoberberine alkaloids. This chain is (S)-scoulerine 9-O-methyltransferase (SMT), found in Coptis japonica (Japanese goldthread).